Consider the following 34-residue polypeptide: DDIT3 upstream open reading frame protein (34 aa).

As to quaternary structure, interacts with DDIT3 (isoform 1).

It is found in the nucleus. The protein localises to the cytoplasm. Its function is as follows. Product of the upstream open reading frame (uORF) of DDIT3/CHOP that is specifically produced in absence of stress, thereby preventing translation of downstream stress effector DDIT3/CHOP. This is DDIT3 upstream open reading frame protein from Homo sapiens (Human).